The primary structure comprises 335 residues: UPF0353 protein MAP_1207 (335 aa).

The next 2 helical transmembrane spans lie at 18-38 (WFFLFLLVVAGLAALYILMQL) and 67-87 (LPAILLVASLVLFTIAMAGPT). Positions 98 to 294 (VVMLVIDVSQ…QELKSVYATL (197 aa)) constitute a VWFA domain. A helical membrane pass occupies residues 309 to 329 (VGWVRLGALVLALAALTALLI).

The protein belongs to the UPF0353 family.

The protein resides in the cell membrane. In Mycolicibacterium paratuberculosis (strain ATCC BAA-968 / K-10) (Mycobacterium paratuberculosis), this protein is UPF0353 protein MAP_1207.